A 239-amino-acid polypeptide reads, in one-letter code: uncharacterized protein (239 aa).

This is an uncharacterized protein from Methanocaldococcus jannaschii (strain ATCC 43067 / DSM 2661 / JAL-1 / JCM 10045 / NBRC 100440) (Methanococcus jannaschii).